Here is a 397-residue protein sequence, read N- to C-terminus: MEKKSLYDISCKGSRVLMRVDFNVPLDEHAHITNDKRIIEALPSIHKIIEDGGRLILMSHLGRPKGKVVPELSLEPVAKRLSELLDTSVVMAGDCIGTEAMQQALALQDGEIMLLENLRFHPEEEKNDPEFARELASMGEIYVNDAFGTAHRAHASTEGICHYVQPSVAGFLIEKELKYLGQALNNPERPFVAILGGAKISGKIDVLENLFNKVDTVLIGGAMIFTFFKAQGLSVGKSLVEDDKVELARHLLQTAKERKINMLLPEDVIAASEFSGDAETMAVPVGGIPENMMGLDIGPKTIDTFSREILAAKTVVWNGPMGVFEIEPFAKGTIAIAQALADATAKGTISIVGGGDSAAAVMKAGLASGITHISTGGGASLEFLEGKELPGITALND.

Residues 21–23, Arg-37, 60–63, Arg-119, and Arg-152 contribute to the substrate site; these read DFN and HLGR. Residues Lys-203, Gly-294, Glu-325, and 354 to 357 contribute to the ATP site; that span reads GGDS.

The protein belongs to the phosphoglycerate kinase family. In terms of assembly, monomer.

The protein resides in the cytoplasm. It catalyses the reaction (2R)-3-phosphoglycerate + ATP = (2R)-3-phospho-glyceroyl phosphate + ADP. Its pathway is carbohydrate degradation; glycolysis; pyruvate from D-glyceraldehyde 3-phosphate: step 2/5. This Chlorobium phaeobacteroides (strain BS1) protein is Phosphoglycerate kinase.